We begin with the raw amino-acid sequence, 348 residues long: Galactose-1-phosphate uridylyltransferase (348 aa).

28–31 (RAKR) is a UDP-alpha-D-glucose binding site. 2 residues coordinate Zn(2+): Cys52 and Cys55. UDP-alpha-D-glucose contacts are provided by residues Val61 and 77–78 (ND). His115 is a Zn(2+) binding site. Residues Asn153 and 159–161 (GCS) each bind UDP-alpha-D-glucose. His164 is a binding site for Zn(2+). His166 acts as the Tele-UMP-histidine intermediate in catalysis. Gln168 is a binding site for UDP-alpha-D-glucose. Fe cation contacts are provided by Glu182, His281, His296, and His298. UDP-alpha-D-glucose contacts are provided by residues 311-312 (KF), 316-317 (YE), and Gln323.

The protein belongs to the galactose-1-phosphate uridylyltransferase type 1 family. It depends on Zn(2+) as a cofactor.

The enzyme catalyses alpha-D-galactose 1-phosphate + UDP-alpha-D-glucose = alpha-D-glucose 1-phosphate + UDP-alpha-D-galactose. The protein operates within carbohydrate metabolism; galactose metabolism. The polypeptide is Galactose-1-phosphate uridylyltransferase (galT) (Salmonella typhimurium (strain LT2 / SGSC1412 / ATCC 700720)).